The sequence spans 105 residues: Replication restart protein PriB (105 aa).

Positions 1–102 constitute an SSB domain; that stretch reads MTANRLVLTG…LHAEQIELID (102 aa).

This sequence belongs to the PriB family. In terms of assembly, homodimer. Interacts with PriA and DnaT. Component of the replication restart primosome. Primosome assembly occurs via a 'hand-off' mechanism. PriA binds to replication forks, subsequently PriB then DnaT bind; DnaT then displaces ssDNA to generate the helicase loading substrate.

Its function is as follows. Involved in the restart of stalled replication forks, which reloads the replicative helicase on sites other than the origin of replication; the PriA-PriB pathway is the major replication restart pathway. During primosome assembly it facilitates complex formation between PriA and DnaT on DNA; stabilizes PriA on DNA. Stimulates the DNA unwinding activity of PriA helicase. The polypeptide is Replication restart protein PriB (Proteus mirabilis (strain HI4320)).